The primary structure comprises 1132 residues: Telomerase reverse transcriptase (1132 aa).

The segment at 1–230 is RNA-interacting domain 1; the sequence is MPRAPRCRAV…ARRRGGSASR (230 aa). Residues 58-197 are GQ motif; it reads VPWDARPPPA…PHASGPRRRL (140 aa). Residues 137–141 are required for regulating specificity for telomeric DNA and for processivity for primer elongation; it reads WGLLL. The disordered stretch occupies residues 210–320; the sequence is AGVPLGLPAP…SRPPRPWDTP (111 aa). Residues 213–234 show a composition bias toward low complexity; sequence PLGLPAPGARRRGGSASRSLPL. Residues 222 to 240 carry the Bipartite nuclear localization signal motif; sequence RRRGGSASRSLPLPKRPRR. Ser227 carries the post-translational modification Phosphoserine; by PKB/AKT1. The tract at residues 231–324 is linker; sequence SLPLPKRPRR…RPWDTPCPPV (94 aa). Residues 293-304 show a composition bias toward basic residues; that stretch reads RHSHPSVGRQHH. The required for oligomerization stretch occupies residues 301-538; it reads RQHHAGPPST…VPAAEHRLRE (238 aa). Residues 310 to 320 are compositionally biased toward pro residues; that stretch reads TSRPPRPWDTP. Positions 325–550 are RNA-interacting domain 2; sequence YAETKHFLYS…LAKFLHWLMS (226 aa). The TFLY; involved in RNA binding motif lies at 328 to 333; sequence TKHFLY. Residues 376–521 form a QFP motif region; the sequence is PRRLPRLPQR…MSVRDCAWLR (146 aa). Residues 397 to 417 form a CP motif region; the sequence is LGNHAQCPYGVLLKTHCPLRA. Phosphoserine; by DYRK2 is present on Ser457. Residues 605–935 form the Reverse transcriptase domain; it reads EVRQHREARP…GLFPWCGLLL (331 aa). Tyr707 bears the Phosphotyrosine; by SRC-type Tyr-kinases mark. 3 residues coordinate Mg(2+): Asp712, Asp868, and Asp869. The tract at residues 914 to 928 is required for oligomerization; sequence LGGTAFVQMPAHGLF. The segment at 930 to 934 is primer grip sequence; it reads WCGLL. The segment at 936–1132 is CTE; it reads DTRTLEVQSD…LPSDFKTILD (197 aa).

The protein belongs to the reverse transcriptase family. Telomerase subfamily. In terms of assembly, catalytic component of the telomerase holoenzyme complex composed of one molecule of TERT, one molecule of WRAP53/TCAB1, two molecules of H/ACA ribonucleoprotein complex subunits DKC1, NOP10, NHP2 and GAR1, and a telomerase RNA template component (TERC). The telomerase holoenzyme complex is associated with TEP1, SMG6/EST1A and POT1. The molecular chaperone HSP90/P23 complex is required for correct assembly and stabilization of the active telomerase. Interacts directly with HSP90A and PTGES3. Interacts with HSPA1A; the interaction occurs in the absence of TERC and dissociates once the complex has formed. Interacts with RAN; the interaction promotes nuclear export of TERT. Interacts with XPO1. Interacts with PTPN11; the interaction retains TERT in the nucleus. Interacts with NCL (via RRM1 and C-terminal RRM4/Arg/Gly-rich domains); the interaction is important for nucleolar localization of TERT. Interacts with SMARCA4 (via the bromodomain); the interaction regulates Wnt-mediated signaling. Interacts with MCRS1 (isoform MCRS2); the interaction inhibits in vitro telomerase activity. Interacts with PIF1; the interaction has no effect on the elongation activity of TERT. Interacts with PML; the interaction recruits TERT to PML bodies and inhibits telomerase activity. Interacts with GNL3L. Interacts with isoform 1 and isoform 2 of NVL. Interacts with DHX36. Interacts with ATF7. Phosphorylation at Tyr-707 under oxidative stress leads to translocation of TERT to the cytoplasm and reduces its antiapoptotic activity. Dephosphorylated by SHP2/PTPN11 leading to nuclear retention. Phosphorylation at Ser-227 by the AKT pathway promotes nuclear location. Phosphorylation at the G2/M phase at Ser-457 by DYRK2 promotes ubiquitination by the EDVP complex and degradation. In terms of processing, ubiquitinated by the EDVP complex, a E3 ligase complex following phosphorylation at Ser-457 by DYRK2. Ubiquitinated leads to proteasomal degradation. Post-translationally, (Microbial infection) In case of infection by HIV-1, the EDVP complex is hijacked by HIV-1 via interaction between HIV-1 Vpr and DCAF1/VPRBP, leading to ubiquitination and degradation. As to expression, expressed at a high level in thymocyte subpopulations, at an intermediate level in tonsil T-lymphocytes, and at a low to undetectable level in peripheral blood T-lymphocytes.

It localises to the nucleus. Its subcellular location is the nucleolus. It is found in the nucleoplasm. The protein resides in the chromosome. The protein localises to the telomere. It localises to the cytoplasm. Its subcellular location is the PML body. It catalyses the reaction DNA(n) + a 2'-deoxyribonucleoside 5'-triphosphate = DNA(n+1) + diphosphate. Its function is as follows. Telomerase is a ribonucleoprotein enzyme essential for the replication of chromosome termini in most eukaryotes. Active in progenitor and cancer cells. Inactive, or very low activity, in normal somatic cells. Catalytic component of the teleromerase holoenzyme complex whose main activity is the elongation of telomeres by acting as a reverse transcriptase that adds simple sequence repeats to chromosome ends by copying a template sequence within the RNA component of the enzyme. Catalyzes the RNA-dependent extension of 3'-chromosomal termini with the 6-nucleotide telomeric repeat unit, 5'-TTAGGG-3'. The catalytic cycle involves primer binding, primer extension and release of product once the template boundary has been reached or nascent product translocation followed by further extension. More active on substrates containing 2 or 3 telomeric repeats. Telomerase activity is regulated by a number of factors including telomerase complex-associated proteins, chaperones and polypeptide modifiers. Modulates Wnt signaling. Plays important roles in aging and antiapoptosis. The protein is Telomerase reverse transcriptase (TERT) of Homo sapiens (Human).